Consider the following 565-residue polypeptide: Putative serine protease pcp-1 (565 aa).

Positions 1-17 (MRWFLVLLLVALVSVEA) are cleaved as a signal peptide. N-linked (GlcNAc...) asparagine glycosylation is found at Asn-69, Asn-107, and Asn-126. Ser-177 serves as the catalytic Charge relay system. N-linked (GlcNAc...) asparagine glycans are attached at residues Asn-240, Asn-244, Asn-257, Asn-271, Asn-319, and Asn-347. Catalysis depends on charge relay system residues Asp-451 and His-479.

This sequence belongs to the peptidase S28 family.

The polypeptide is Putative serine protease pcp-1 (pcp-1) (Caenorhabditis elegans).